The sequence spans 318 residues: MTNFKLKIASRRSKLAMVQTLWVKDQLERNIPNLDVSIEAMATQGDKILDVALAKIGDKGLFTKELEAQMLVGHADIAVHSLKDLPTNLPNGLKLGCITKREDPADALVVSKKNDYYKLETLPEGSIVGTSSLRRLAQLRNKYPHLVFKDIRGNVITRIEKLDAGEFDCIILAAAGLKRLGFESRIHQIIPSEISLHAVGQGALGIECKSDDKKVLEIINVLEDKPTSQRCLAERAFLRELEGGCQVPIGVNSNIDNGQLYLTGMVASLDGKKLIKDQVIGNINNPELVGIELAKRLKLQGADKILSEIFEEFRENKN.

C245 bears the S-(dipyrrolylmethanemethyl)cysteine mark.

Belongs to the HMBS family. In terms of assembly, monomer. Requires dipyrromethane as cofactor.

The catalysed reaction is 4 porphobilinogen + H2O = hydroxymethylbilane + 4 NH4(+). It participates in porphyrin-containing compound metabolism; protoporphyrin-IX biosynthesis; coproporphyrinogen-III from 5-aminolevulinate: step 2/4. It functions in the pathway porphyrin-containing compound metabolism; chlorophyll biosynthesis. Functionally, tetrapolymerization of the monopyrrole PBG into the hydroxymethylbilane pre-uroporphyrinogen in several discrete steps. The sequence is that of Porphobilinogen deaminase from Prochlorococcus marinus (strain MIT 9215).